A 174-amino-acid chain; its full sequence is Negative modulator of initiation of replication (174 aa).

It belongs to the SeqA family. In terms of assembly, homodimer. Polymerizes to form helical filaments.

It localises to the cytoplasm. Its function is as follows. Negative regulator of replication initiation, which contributes to regulation of DNA replication and ensures that replication initiation occurs exactly once per chromosome per cell cycle. Binds to pairs of hemimethylated GATC sequences in the oriC region, thus preventing assembly of replication proteins and re-initiation at newly replicated origins. Repression is relieved when the region becomes fully methylated. The sequence is that of Negative modulator of initiation of replication from Pseudoalteromonas atlantica (strain T6c / ATCC BAA-1087).